The following is a 511-amino-acid chain: Bifunctional purine biosynthesis protein PurH (511 aa).

The MGS-like domain maps to 1-145; that stretch reads MKKRALVSVS…KNHKFVSVIV (145 aa).

This sequence belongs to the PurH family.

The enzyme catalyses (6R)-10-formyltetrahydrofolate + 5-amino-1-(5-phospho-beta-D-ribosyl)imidazole-4-carboxamide = 5-formamido-1-(5-phospho-D-ribosyl)imidazole-4-carboxamide + (6S)-5,6,7,8-tetrahydrofolate. It catalyses the reaction IMP + H2O = 5-formamido-1-(5-phospho-D-ribosyl)imidazole-4-carboxamide. It participates in purine metabolism; IMP biosynthesis via de novo pathway; 5-formamido-1-(5-phospho-D-ribosyl)imidazole-4-carboxamide from 5-amino-1-(5-phospho-D-ribosyl)imidazole-4-carboxamide (10-formyl THF route): step 1/1. It functions in the pathway purine metabolism; IMP biosynthesis via de novo pathway; IMP from 5-formamido-1-(5-phospho-D-ribosyl)imidazole-4-carboxamide: step 1/1. The chain is Bifunctional purine biosynthesis protein PurH from Bacillus mycoides (strain KBAB4) (Bacillus weihenstephanensis).